We begin with the raw amino-acid sequence, 465 residues long: UDP-N-acetylmuramate--L-alanine ligase (465 aa).

Residue 114–120 (GTHGKTT) participates in ATP binding.

The protein belongs to the MurCDEF family.

It localises to the cytoplasm. The catalysed reaction is UDP-N-acetyl-alpha-D-muramate + L-alanine + ATP = UDP-N-acetyl-alpha-D-muramoyl-L-alanine + ADP + phosphate + H(+). It functions in the pathway cell wall biogenesis; peptidoglycan biosynthesis. Its function is as follows. Cell wall formation. The chain is UDP-N-acetylmuramate--L-alanine ligase from Chlorobium phaeobacteroides (strain BS1).